The chain runs to 156 residues: Deoxyuridine 5'-triphosphate nucleotidohydrolase (156 aa).

Substrate is bound by residues 76 to 78 (RSG), Asn89, 93 to 95 (TVD), and Lys103.

This sequence belongs to the dUTPase family. Mg(2+) serves as cofactor.

The enzyme catalyses dUTP + H2O = dUMP + diphosphate + H(+). It functions in the pathway pyrimidine metabolism; dUMP biosynthesis; dUMP from dCTP (dUTP route): step 2/2. Its function is as follows. This enzyme is involved in nucleotide metabolism: it produces dUMP, the immediate precursor of thymidine nucleotides and it decreases the intracellular concentration of dUTP so that uracil cannot be incorporated into DNA. The chain is Deoxyuridine 5'-triphosphate nucleotidohydrolase from Rhizobium etli (strain ATCC 51251 / DSM 11541 / JCM 21823 / NBRC 15573 / CFN 42).